The chain runs to 425 residues: Orexin/Hypocretin receptor type 1 (425 aa).

A disordered region spans residues 1–25 (MEPSATPGPQMGVPTEGRERSPEPP). At 1–46 (MEPSATPGPQMGVPTEGRERSPEPPDYEDEFLRYLWRDYLYPKQYE) the chain is on the extracellular side. The interval 26 to 41 (DYEDEFLRYLWRDYLY) is required for response to orexin-A. Residues 47 to 67 (WVLIAAYVAVFFVALVGNTLV) traverse the membrane as a helical segment. The Cytoplasmic portion of the chain corresponds to 68–82 (CLAVWRNHHMRTVTN). The chain crosses the membrane as a helical span at residues 83 to 105 (YFIVNLSLADVLVTAICLPASLL). Over 106–119 (VDITESWLFGHALC) the chain is Extracellular. Cys119 and Cys202 are oxidised to a cystine. A helical transmembrane segment spans residues 120–140 (KVIPYLQAVSVSVAVLTLSFI). At 141 to 160 (ALDRWYAICHPLLFKSTARR) the chain is on the cytoplasmic side. The helical transmembrane segment at 161-182 (ARGSILGIWAVSLAVMVPQAAV) threads the bilayer. At 183–213 (MECSSVLPELANRTRLFSVCDERWADDLYPK) the chain is on the extracellular side. Residue Asn194 is glycosylated (N-linked (GlcNAc...) asparagine). The chain crosses the membrane as a helical span at residues 214–235 (IYHSCFFIVTYLAPLGLMAMAY). Residues 236 to 298 (FQIFRKLWGR…QMRARRKTAK (63 aa)) lie on the Cytoplasmic side of the membrane. Residues 299-321 (MLMVVLLVFALCYLPISVLNVLK) form a helical membrane-spanning segment. Topologically, residues 322–336 (RVFGMFRQASDREAV) are extracellular. The helical transmembrane segment at 337-360 (YACFTFSHWLVYANSAANPIIYNF) threads the bilayer. Residues 361 to 425 (LSGKFREQFK…LLTSVTTVLP (65 aa)) are Cytoplasmic-facing.

Belongs to the G-protein coupled receptor 1 family.

Its subcellular location is the cell membrane. Moderately selective excitatory receptor for orexin-A and, with a lower affinity, for orexin-B neuropeptide. Triggers an increase in cytoplasmic Ca(2+) levels in response to orexin-A binding. In Bos taurus (Bovine), this protein is Orexin/Hypocretin receptor type 1.